The primary structure comprises 129 residues: MTQTPLYGERAIAEAELICFDNPRPGRPYEVSIELPEFTCKCPFSGYPDFAVLRMIYQPGPRVVELKAIKLYVNSYRDQSISHEEVTNRILDDLVAATDPVWMQLEADFNPRGNVHTVVRVSHGTRQPC.

Residue Cys-42 is the Thioimide intermediate of the active site. The active-site Proton donor is the Asp-49. Residues 64–66 (VEL) and 83–84 (HE) each bind substrate.

The protein belongs to the GTP cyclohydrolase I family. QueF type 1 subfamily.

It is found in the cytoplasm. The enzyme catalyses 7-aminomethyl-7-carbaguanine + 2 NADP(+) = 7-cyano-7-deazaguanine + 2 NADPH + 3 H(+). It functions in the pathway tRNA modification; tRNA-queuosine biosynthesis. Functionally, catalyzes the NADPH-dependent reduction of 7-cyano-7-deazaguanine (preQ0) to 7-aminomethyl-7-deazaguanine (preQ1). This Synechococcus sp. (strain CC9605) protein is NADPH-dependent 7-cyano-7-deazaguanine reductase.